The sequence spans 350 residues: Protein O-mannose kinase (350 aa).

At Met1 the chain carries N-acetylmethionine. At 1–20 the chain is on the cytoplasmic side; sequence MEKQPQNKRRGLAPREVPPA. The helical; Signal-anchor for type II membrane protein transmembrane segment at 21-43 threads the bilayer; that stretch reads VGLLLIMALMNTLLYLCLDHFFI. Residues 44 to 350 are Lumenal-facing; that stretch reads APRQSIVDPR…AVMSQAREML (307 aa). Residues 81–350 enclose the Protein kinase domain; that stretch reads VRQLKRVGEG…AVMSQAREML (270 aa). 3 N-linked (GlcNAc...) asparagine glycosylation sites follow: Asn165, Asn220, and Asn235.

Belongs to the protein kinase superfamily. Ser/Thr protein kinase family. STKL subfamily.

Its subcellular location is the endoplasmic reticulum membrane. It carries out the reaction 3-O-[beta-D-GalNAc-(1-&gt;3)-beta-D-GlcNAc-(1-&gt;4)-alpha-D-Man]-L-Thr-[protein] + ATP = 3-O-[beta-D-GalNAc-(1-&gt;3)-beta-D-GlcNAc-(1-&gt;4)-(O-6-P-alpha-D-Man)]-Thr-[protein] + ADP + H(+). Protein O-mannose kinase that specifically mediates phosphorylation at the 6-position of an O-mannose of the trisaccharide (N-acetylgalactosamine (GalNAc)-beta-1,3-N-acetylglucosamine (GlcNAc)-beta-1,4-mannose) to generate phosphorylated O-mannosyl trisaccharide (N-acetylgalactosamine-beta-1,3-N-acetylglucosamine-beta-1,4-(phosphate-6-)mannose). Phosphorylated O-mannosyl trisaccharide is a carbohydrate structure present in alpha-dystroglycan (DAG1), which is required for binding laminin G-like domain-containing extracellular proteins with high affinity. Only shows kinase activity when the GalNAc-beta-3-GlcNAc-beta-terminus is linked to the 4-position of O-mannose, suggesting that this disaccharide serves as the substrate recognition motif. In Macaca fascicularis (Crab-eating macaque), this protein is Protein O-mannose kinase (POMK).